A 610-amino-acid polypeptide reads, in one-letter code: Elongation factor 4 (610 aa).

One can recognise a tr-type G domain in the interval 15-197; sequence KSIRNFSIIA…RIINDIPYPK (183 aa). Residues 27–32 and 144–147 each bind GTP; these read DHGKST and NKID.

The protein belongs to the TRAFAC class translation factor GTPase superfamily. Classic translation factor GTPase family. LepA subfamily.

It localises to the cell membrane. It carries out the reaction GTP + H2O = GDP + phosphate + H(+). Functionally, required for accurate and efficient protein synthesis under certain stress conditions. May act as a fidelity factor of the translation reaction, by catalyzing a one-codon backward translocation of tRNAs on improperly translocated ribosomes. Back-translocation proceeds from a post-translocation (POST) complex to a pre-translocation (PRE) complex, thus giving elongation factor G a second chance to translocate the tRNAs correctly. Binds to ribosomes in a GTP-dependent manner. The chain is Elongation factor 4 from Buchnera aphidicola subsp. Acyrthosiphon pisum (strain 5A).